Consider the following 146-residue polypeptide: D-aminoacyl-tRNA deacylase (146 aa).

A Gly-cisPro motif, important for rejection of L-amino acids motif is present at residues 138-139; sequence GP.

This sequence belongs to the DTD family. Homodimer.

It localises to the cytoplasm. It carries out the reaction glycyl-tRNA(Ala) + H2O = tRNA(Ala) + glycine + H(+). It catalyses the reaction a D-aminoacyl-tRNA + H2O = a tRNA + a D-alpha-amino acid + H(+). Its function is as follows. An aminoacyl-tRNA editing enzyme that deacylates mischarged D-aminoacyl-tRNAs. Also deacylates mischarged glycyl-tRNA(Ala), protecting cells against glycine mischarging by AlaRS. Acts via tRNA-based rather than protein-based catalysis; rejects L-amino acids rather than detecting D-amino acids in the active site. By recycling D-aminoacyl-tRNA to D-amino acids and free tRNA molecules, this enzyme counteracts the toxicity associated with the formation of D-aminoacyl-tRNA entities in vivo and helps enforce protein L-homochirality. The protein is D-aminoacyl-tRNA deacylase of Tolumonas auensis (strain DSM 9187 / NBRC 110442 / TA 4).